A 194-amino-acid chain; its full sequence is Oligoribonuclease (194 aa).

The Exonuclease domain occupies 11–174 (LIWIDLEMTG…SDVRDSIDEL (164 aa)). Tyr-132 is an active-site residue.

It belongs to the oligoribonuclease family.

The protein resides in the cytoplasm. Functionally, 3'-to-5' exoribonuclease specific for small oligoribonucleotides. The polypeptide is Oligoribonuclease (Xanthomonas campestris pv. campestris (strain ATCC 33913 / DSM 3586 / NCPPB 528 / LMG 568 / P 25)).